Here is a 370-residue protein sequence, read N- to C-terminus: DNA replication and repair protein RecF (370 aa).

33-40 provides a ligand contact to ATP; sequence GPNAAGKT.

The protein belongs to the RecF family.

The protein resides in the cytoplasm. The RecF protein is involved in DNA metabolism; it is required for DNA replication and normal SOS inducibility. RecF binds preferentially to single-stranded, linear DNA. It also seems to bind ATP. The protein is DNA replication and repair protein RecF of Moorella thermoacetica (strain ATCC 39073 / JCM 9320).